We begin with the raw amino-acid sequence, 56 residues long: Small ribosomal subunit protein bS21 (56 aa).

This sequence belongs to the bacterial ribosomal protein bS21 family.

The polypeptide is Small ribosomal subunit protein bS21 (Dictyoglomus thermophilum (strain ATCC 35947 / DSM 3960 / H-6-12)).